Reading from the N-terminus, the 246-residue chain is Ribonuclease PH (246 aa).

The segment at 67–87 (NMLPGSTSPRKRRDRSGKVDG) is disordered. Phosphate is bound by residues arginine 88 and 126-128 (GTR).

Belongs to the RNase PH family. Homohexameric ring arranged as a trimer of dimers.

It catalyses the reaction tRNA(n+1) + phosphate = tRNA(n) + a ribonucleoside 5'-diphosphate. Phosphorolytic 3'-5' exoribonuclease that plays an important role in tRNA 3'-end maturation. Removes nucleotide residues following the 3'-CCA terminus of tRNAs; can also add nucleotides to the ends of RNA molecules by using nucleoside diphosphates as substrates, but this may not be physiologically important. Probably plays a role in initiation of 16S rRNA degradation (leading to ribosome degradation) during starvation. The protein is Ribonuclease PH of Rhodopirellula baltica (strain DSM 10527 / NCIMB 13988 / SH1).